The chain runs to 300 residues: MKNLTHLQRLEAEAIHVFREVAATFSNPVMLYSVSKDSSVMLHLAMKAFYPAPPPFPFLHVDTTWKFREMIEFRDAQAREKGFELLVHVNEQGVRDGIGPFTHGSNVHTHIMKTVGLRQALDKYRFDAAFGGARRDEEKSRAKERIFSFRNAQHGWDPKNQRPEMWKIYNTRVSKGESIRVFPLSNWTELDIWQYILQENIPIVPLYFAARRPVVERDGMLIMVDDDRMKLRPGEPVENRLVRFRTLGCYPLTGAIPSSAANLSDIVEEMLIARTSERQGRAIDRDEAGSMEKKKREGYF.

The disordered stretch occupies residues 281 to 300 (RAIDRDEAGSMEKKKREGYF).

It belongs to the PAPS reductase family. CysD subfamily. As to quaternary structure, heterodimer composed of CysD, the smaller subunit, and CysN.

It catalyses the reaction sulfate + ATP + H(+) = adenosine 5'-phosphosulfate + diphosphate. It functions in the pathway sulfur metabolism; hydrogen sulfide biosynthesis; sulfite from sulfate: step 1/3. In terms of biological role, with CysN forms the ATP sulfurylase (ATPS) that catalyzes the adenylation of sulfate producing adenosine 5'-phosphosulfate (APS) and diphosphate, the first enzymatic step in sulfur assimilation pathway. APS synthesis involves the formation of a high-energy phosphoric-sulfuric acid anhydride bond driven by GTP hydrolysis by CysN coupled to ATP hydrolysis by CysD. The protein is Sulfate adenylyltransferase subunit 2 of Brucella melitensis biotype 2 (strain ATCC 23457).